Reading from the N-terminus, the 315-residue chain is Protein sprouty homolog 2 (315 aa).

A compositionally biased stretch (polar residues) spans 1 to 15; that stretch reads MEARAQSGNGSQPLL. Disordered regions lie at residues 1 to 39 and 51 to 140; these read MEAR…QQVH and NTNE…GSSF. A compositionally biased stretch (basic and acidic residues) spans 20–32; the sequence is DGGRQRGEPDPRD. Residues 108–140 are compositionally biased toward low complexity; sequence SRSISTVSSGSRSSTRTSTSSSSSEQRLLGSSF. Residues 118 to 315 form a required for interaction with CAV1 region; that stretch reads SRSSTRTSTS…VPPRNFEKPT (198 aa). The SPR domain maps to 177-291; sequence RCEDCGKCKC…CYDRVNRPGC (115 aa). Positions 178–315 are required for interaction with TESK1; sequence CEDCGKCKCK…VPPRNFEKPT (138 aa).

This sequence belongs to the sprouty family. In terms of assembly, forms heterodimers with SPRY1. Forms a tripartite complex containing GAB1, METTL13 and SPRY2. Within the complex interacts with METTL13. Interacts with RAF1. Interacts (via C-terminus) with TESK1 (via C-terminus); the interaction disrupts SPRY2 interaction with GRB2, potentially via disruption of SPRY2 serine dephosphorylation. Interacts with PPP2R1A/PP2A-A and PPP2CA/PP2A-C; the interaction with PPP2CA/PP2A-C is inhibited by interaction with TESK1, possibly by vesicular sequestration of SPRY2. Inhibition of the interaction with the serine/threonine-protein phosphatase 2A (PP2A) holoenzyme results in loss of PP2A-mediated dephosphorylation, resulting in the loss of SPRY2 interaction with GRB2. Interacts with GRB2. Interacts with CBL/C-CBL; the interaction inhibits CBL-mediated ubiquitination of EGFR. Interacts (via C-terminus) with CAV1 (via C-terminus). Cleaved at Pro-144 by the prolyl endopeptidase FAP (seprase) activity (in vitro).

The protein localises to the cytoplasm. Its subcellular location is the cytoskeleton. The protein resides in the cell projection. It is found in the ruffle membrane. Functionally, antagonist of fibroblast growth factor (FGF) pathways via inhibition of FGF-mediated phosphorylation of ERK1/2. Thereby acts as an antagonist of FGF-induced retinal lens fiber differentiation, may inhibit limb bud outgrowth and may negatively modulate respiratory organogenesis. Inhibits TGFB-induced epithelial-to-mesenchymal transition in retinal lens epithelial cells. Inhibits CBL/C-CBL-mediated EGFR ubiquitination. The polypeptide is Protein sprouty homolog 2 (SPRY2) (Macaca fascicularis (Crab-eating macaque)).